A 323-amino-acid chain; its full sequence is Glutamyl-Q tRNA(Asp) synthetase (323 aa).

Residues 5–9 (RFAPT) and Glu41 contribute to the L-glutamate site. The 'HIGH' region signature appears at 8 to 18 (PTPSGALHLGN). 4 residues coordinate Zn(2+): Cys105, Cys107, Tyr129, and Cys133. Tyr193 and Arg211 together coordinate L-glutamate. Residues 249–253 (RLAKR) carry the 'KMSKS' region motif. Lys252 serves as a coordination point for ATP.

This sequence belongs to the class-I aminoacyl-tRNA synthetase family. GluQ subfamily. Zn(2+) is required as a cofactor.

Catalyzes the tRNA-independent activation of glutamate in presence of ATP and the subsequent transfer of glutamate onto a tRNA(Asp). Glutamate is transferred on the 2-amino-5-(4,5-dihydroxy-2-cyclopenten-1-yl) moiety of the queuosine in the wobble position of the QUC anticodon. The sequence is that of Glutamyl-Q tRNA(Asp) synthetase from Symbiobacterium thermophilum (strain DSM 24528 / JCM 14929 / IAM 14863 / T).